We begin with the raw amino-acid sequence, 341 residues long: S-adenosylmethionine:tRNA ribosyltransferase-isomerase (341 aa).

It belongs to the QueA family. Monomer.

The protein resides in the cytoplasm. It carries out the reaction 7-aminomethyl-7-carbaguanosine(34) in tRNA + S-adenosyl-L-methionine = epoxyqueuosine(34) in tRNA + adenine + L-methionine + 2 H(+). It participates in tRNA modification; tRNA-queuosine biosynthesis. In terms of biological role, transfers and isomerizes the ribose moiety from AdoMet to the 7-aminomethyl group of 7-deazaguanine (preQ1-tRNA) to give epoxyqueuosine (oQ-tRNA). The sequence is that of S-adenosylmethionine:tRNA ribosyltransferase-isomerase from Clostridium beijerinckii (strain ATCC 51743 / NCIMB 8052) (Clostridium acetobutylicum).